A 1354-amino-acid polypeptide reads, in one-letter code: Phosphoribosylformylglycinamidine synthase (1354 aa).

ATP contacts are provided by residues 327 to 338 (GATTGTGGRLRD), 407 to 409 (SGF), and A714. 4 residues coordinate Mg(2+): D715, E754, N758, and D918. An ATP-binding site is contributed by S920. The Glutamine amidotransferase type-1 domain occupies 1087–1337 (VAVLREEGVN…EVSPTQSESP (251 aa)). C1180 acts as the Nucleophile in catalysis. Active-site residues include H1310 and E1312.

In the N-terminal section; belongs to the FGAMS family.

The catalysed reaction is N(2)-formyl-N(1)-(5-phospho-beta-D-ribosyl)glycinamide + L-glutamine + ATP + H2O = 2-formamido-N(1)-(5-O-phospho-beta-D-ribosyl)acetamidine + L-glutamate + ADP + phosphate + H(+). It functions in the pathway purine metabolism; IMP biosynthesis via de novo pathway; 5-amino-1-(5-phospho-D-ribosyl)imidazole from N(2)-formyl-N(1)-(5-phospho-D-ribosyl)glycinamide: step 1/2. Functionally, phosphoribosylformylglycinamidine synthase involved in the purines biosynthetic pathway. Catalyzes the ATP-dependent conversion of formylglycinamide ribonucleotide (FGAR) and glutamine to yield formylglycinamidine ribonucleotide (FGAM) and glutamate. Because of its role in metabolisms, is involved in sleep regulation. The chain is Phosphoribosylformylglycinamidine synthase from Drosophila melanogaster (Fruit fly).